Consider the following 535-residue polypeptide: Probable fucosyltransferase 4 (535 aa).

At Met-1 to Lys-20 the chain is on the cytoplasmic side. A helical; Signal-anchor for type II membrane protein transmembrane segment spans residues Ile-21 to Ser-41. Residues Asn-42 to Leu-535 lie on the Lumenal side of the membrane. Asn-136, Asn-226, Asn-230, Asn-377, and Asn-409 each carry an N-linked (GlcNAc...) asparagine glycan.

Belongs to the glycosyltransferase 37 family. Expressed in roots, stems, leaves, flowers, siliques and seedlings.

The protein localises to the golgi apparatus. The protein resides in the golgi stack membrane. It participates in protein modification; protein glycosylation. Its function is as follows. May be involved in cell wall biosynthesis. May act as a fucosyltransferase. The chain is Probable fucosyltransferase 4 (FUT4) from Arabidopsis thaliana (Mouse-ear cress).